We begin with the raw amino-acid sequence, 596 residues long: Succinate dehydrogenase flavoprotein subunit (596 aa).

FAD is bound by residues 18-23 (GAGGAG), 41-56 (TKLF…AQGG), and Asp225. His49 bears the Tele-8alpha-FAD histidine mark. 2 residues coordinate substrate: His246 and Thr258. Arg290 acts as the Proton acceptor in catalysis. His357 provides a ligand contact to substrate. Glu391 serves as a coordination point for FAD. Residue Arg402 coordinates substrate. 407 to 408 (SL) contributes to the FAD binding site.

The protein belongs to the FAD-dependent oxidoreductase 2 family. FRD/SDH subfamily. As to quaternary structure, part of an enzyme complex containing four subunits: a flavoprotein, an iron-sulfur, cytochrome b-556, and a hydrophobic anchor protein. FAD is required as a cofactor.

The protein localises to the cell inner membrane. It carries out the reaction a quinone + succinate = fumarate + a quinol. It participates in carbohydrate metabolism; tricarboxylic acid cycle; fumarate from succinate (bacterial route): step 1/1. In Rickettsia conorii (strain ATCC VR-613 / Malish 7), this protein is Succinate dehydrogenase flavoprotein subunit (sdhA).